The sequence spans 318 residues: MTYRSIGSTAYPTIGVVLLGGIANPVTRTPLHTSAGIAYSDSCGSIRSETRIYADEATHIYFNGTESTDDNRSVRRVLDRYSSVFEEAFGTKTVSYSSQNFGILSGSSDAGAASIGAAILGLKPDLDPHDVENDLRAVSESAGRSLFGGLTITWSDGFHAYTEKILDPEAFSGYSIVAFAFDYQRNPSDVIHQNIVRSDLYPARKKHADEHAHMIKEYAKTNDIKGIFDLAQEDTEEYHSILRGVGVNVIRENMQKLISYLKLIRKDYWNAYIVTGGSNVYVAVESENADRLFSIENTFGSKKKMLRIVGGAWHRRPE.

Leu-19 lines the substrate pocket. ATP contacts are provided by residues 96–100 (YSSQN) and 105–108 (SGSS). 2 residues coordinate substrate: Glu-140 and Arg-144. 2 residues coordinate ATP: Arg-185 and Ser-188.

Belongs to the GHMP kinase family. As to quaternary structure, homodimer.

It carries out the reaction (R)-mevalonate + ATP = (R)-3-phosphomevalonate + ADP + H(+). Its pathway is isoprenoid biosynthesis; isopentenyl diphosphate biosynthesis via mevalonate pathway. Functionally, catalyzes the phosphorylation of mevalonate (MVA) to yield mevalonate-3-phosphate. Functions in an alternative mevalonate pathway, only present in extreme acidophiles of the Thermoplasmatales order, which passes through mevalonate 3-phosphate rather than mevalonate 5-phosphate. This chain is Mevalonate 3-kinase, found in Thermoplasma acidophilum (strain ATCC 25905 / DSM 1728 / JCM 9062 / NBRC 15155 / AMRC-C165).